Consider the following 139-residue polypeptide: D-ribose pyranase (139 aa).

Residue His20 is the Proton donor of the active site. Substrate-binding positions include Asp28, His106, and 128–130; that span reads FAN.

This sequence belongs to the RbsD / FucU family. RbsD subfamily. In terms of assembly, homodecamer.

It localises to the cytoplasm. The enzyme catalyses beta-D-ribopyranose = beta-D-ribofuranose. Its pathway is carbohydrate metabolism; D-ribose degradation; D-ribose 5-phosphate from beta-D-ribopyranose: step 1/2. Functionally, catalyzes the interconversion of beta-pyran and beta-furan forms of D-ribose. The sequence is that of D-ribose pyranase from Klebsiella pneumoniae (strain 342).